Here is a 507-residue protein sequence, read N- to C-terminus: Sterol 14-alpha demethylase CYP51A (507 aa).

The chain crosses the membrane as a helical span at residues 7 to 29 (YPLWVLVALFAVIIANLLYQQLP). Tyr105 contacts lanosterol. Cys449 lines the heme pocket.

Belongs to the cytochrome P450 family. It depends on heme as a cofactor.

It is found in the endoplasmic reticulum membrane. It catalyses the reaction a 14alpha-methyl steroid + 3 reduced [NADPH--hemoprotein reductase] + 3 O2 = a Delta(14) steroid + formate + 3 oxidized [NADPH--hemoprotein reductase] + 4 H2O + 4 H(+). The enzyme catalyses a 14alpha-methyl steroid + reduced [NADPH--hemoprotein reductase] + O2 = a 14alpha-hydroxymethyl steroid + oxidized [NADPH--hemoprotein reductase] + H2O + H(+). It carries out the reaction a 14alpha-hydroxymethyl steroid + reduced [NADPH--hemoprotein reductase] + O2 = a 14alpha-formyl steroid + oxidized [NADPH--hemoprotein reductase] + 2 H2O + H(+). The catalysed reaction is a 14alpha-formyl steroid + reduced [NADPH--hemoprotein reductase] + O2 = a Delta(14) steroid + formate + oxidized [NADPH--hemoprotein reductase] + H2O + 2 H(+). It catalyses the reaction lanosterol + 3 reduced [NADPH--hemoprotein reductase] + 3 O2 = 4,4-dimethyl-5alpha-cholesta-8,14,24-trien-3beta-ol + formate + 3 oxidized [NADPH--hemoprotein reductase] + 4 H2O + 4 H(+). The enzyme catalyses lanosterol + reduced [NADPH--hemoprotein reductase] + O2 = 32-hydroxylanosterol + oxidized [NADPH--hemoprotein reductase] + H2O + H(+). It carries out the reaction 32-hydroxylanosterol + reduced [NADPH--hemoprotein reductase] + O2 = 32-oxolanosterol + oxidized [NADPH--hemoprotein reductase] + 2 H2O + H(+). The catalysed reaction is 32-oxolanosterol + reduced [NADPH--hemoprotein reductase] + O2 = 4,4-dimethyl-5alpha-cholesta-8,14,24-trien-3beta-ol + formate + oxidized [NADPH--hemoprotein reductase] + H2O + 2 H(+). It catalyses the reaction eburicol + 3 reduced [NADPH--hemoprotein reductase] + 3 O2 = 14-demethyleburicol + formate + 3 oxidized [NADPH--hemoprotein reductase] + 4 H2O + 4 H(+). The enzyme catalyses eburicol + reduced [NADPH--hemoprotein reductase] + O2 = 32-hydroxyeburicol + oxidized [NADPH--hemoprotein reductase] + H2O + H(+). It carries out the reaction 32-hydroxyeburicol + reduced [NADPH--hemoprotein reductase] + O2 = 32-oxoeburicol + oxidized [NADPH--hemoprotein reductase] + 2 H2O + H(+). The catalysed reaction is 32-oxoeburicol + reduced [NADPH--hemoprotein reductase] + O2 = 14-demethyleburicol + formate + oxidized [NADPH--hemoprotein reductase] + H2O + 2 H(+). It participates in steroid metabolism; ergosterol biosynthesis. Functionally, together with cyp51B and cyp51C, encodes the sterol 14alpha-demethylase that plays a critical role in the third module of ergosterol biosynthesis pathway, being ergosterol the major sterol component in fungal membranes that participates in a variety of functions. CYP51A encodes the sterol 14-alpha-demethylase induced on ergosterol depletion and is responsible for the intrinsic variation in azole sensitivity. The third module or late pathway involves the ergosterol synthesis itself through consecutive reactions that mainly occur in the endoplasmic reticulum (ER) membrane. In filamentous fungi, during the initial step of this module, lanosterol (lanosta-8,24-dien-3beta-ol) can be metabolized to eburicol. Sterol 14alpha-demethylase catalyzes the three-step oxidative removal of the 14alpha-methyl group (C-32) of both these sterols in the form of formate, and converts eburicol and lanosterol to 14-demethyleburicol (4,4,24-trimethylergosta-8,14,24(28)-trienol) and 4,4-dimethyl-5alpha-cholesta-8,14,24-trien-3beta-ol, respectively, which are further metabolized by other enzymes in the pathway to ergosterol. Can also use substrates not intrinsic to fungi, such as 24,25-dihydrolanosterol (DHL), producing 4,4'-dimethyl-8,14-cholestadien-3-beta-ol, but at lower rates than the endogenous substrates. This chain is Sterol 14-alpha demethylase CYP51A, found in Gibberella zeae (strain ATCC MYA-4620 / CBS 123657 / FGSC 9075 / NRRL 31084 / PH-1) (Wheat head blight fungus).